The chain runs to 650 residues: Chaperone protein HtpG (650 aa).

An a; substrate-binding region spans residues 1–349; the sequence is MSKTVKKFET…SSDLPLNVSR (349 aa). The b stretch occupies residues 350 to 566; sequence EILQEDVQIK…EHGLNANMER (217 aa). The segment at 567–650 is c; it reads ILRAMNQTVP…VADGKAAAGE (84 aa).

Belongs to the heat shock protein 90 family. In terms of assembly, homodimer.

The protein resides in the cytoplasm. Its function is as follows. Molecular chaperone. Has ATPase activity. This chain is Chaperone protein HtpG, found in Geobacter sulfurreducens (strain ATCC 51573 / DSM 12127 / PCA).